Consider the following 476-residue polypeptide: Zinc finger protein 563 (476 aa).

Positions Val4–Ile96 constitute a KRAB domain. The C2H2-type 1; degenerate zinc finger occupies Asp101–Asp125. The C2H2-type 2; degenerate zinc finger occupies Tyr169–Gln191. 10 consecutive C2H2-type zinc fingers follow at residues Tyr197 to His219, Tyr225 to His247, Tyr253 to His275, Tyr281 to His303, Tyr309 to His331, His337 to His359, Tyr365 to His387, His393 to His415, Tyr421 to His443, and Asn449 to His471.

It belongs to the krueppel C2H2-type zinc-finger protein family.

The protein localises to the nucleus. In terms of biological role, may be involved in transcriptional regulation. This is Zinc finger protein 563 (ZNF563) from Homo sapiens (Human).